The following is a 321-amino-acid chain: Glucan 1,3-beta-glucosidase (321 aa).

Positions Met1–Ala21 are cleaved as a signal peptide. Asn39 and Asn99 each carry an N-linked (GlcNAc...) asparagine glycan. The active-site Proton donor is the Glu141. N-linked (GlcNAc...) asparagine glycosylation is found at Asn210, Asn213, and Asn237. Glu244 functions as the Nucleophile in the catalytic mechanism. 2 N-linked (GlcNAc...) asparagine glycosylation sites follow: Asn309 and Asn317.

This sequence belongs to the glycosyl hydrolase 17 family.

The protein localises to the secreted. The protein resides in the cell wall. The enzyme catalyses Successive hydrolysis of beta-D-glucose units from the non-reducing ends of (1-&gt;3)-beta-D-glucans, releasing alpha-glucose.. Its function is as follows. Glucanases possibly play a role in cell expansion during growth, in cell-cell fusion during mating, and in spore release during sporulation. This enzyme may be involved in beta-glucan degradation and also function biosynthetically as a transglycosylase. This is Glucan 1,3-beta-glucosidase (bgl2) from Schizosaccharomyces pombe (strain 972 / ATCC 24843) (Fission yeast).